We begin with the raw amino-acid sequence, 299 residues long: Nitrogenase iron protein (299 aa).

8–15 (GKGGIGKS) is an ATP binding site. [4Fe-4S] cluster is bound at residue cysteine 96. Position 99 is an ADP-ribosylarginine; by dinitrogenase reductase ADP-ribosyltransferase (arginine 99). Cysteine 130 lines the [4Fe-4S] cluster pocket.

The protein belongs to the NifH/BchL/ChlL family. In terms of assembly, homodimer. The cofactor is [4Fe-4S] cluster. The reversible ADP-ribosylation of Arg-99 inactivates the nitrogenase reductase and regulates nitrogenase activity.

The catalysed reaction is N2 + 8 reduced [2Fe-2S]-[ferredoxin] + 16 ATP + 16 H2O = H2 + 8 oxidized [2Fe-2S]-[ferredoxin] + 2 NH4(+) + 16 ADP + 16 phosphate + 6 H(+). Functionally, the key enzymatic reactions in nitrogen fixation are catalyzed by the nitrogenase complex, which has 2 components: the iron protein and the molybdenum-iron protein. In Gloeothece citriformis (strain PCC 7424) (Cyanothece sp. (strain PCC 7424)), this protein is Nitrogenase iron protein.